The chain runs to 58 residues: Teratocyte protein CftICK-III (58 aa).

The first 24 residues, 1–24 (MQKFMRLFFLGLFFILFMTTQIKA), serve as a signal peptide directing secretion. 3 cysteine pairs are disulfide-bonded: Cys-27–Cys-42, Cys-34–Cys-47, and Cys-41–Cys-55.

Abundantly expressed by teratocytes, which are extra-embryonic cells released by parasitoid wasps into their hosts during larval eclosion.

It is found in the secreted. In terms of biological role, this endoparasitoid wasp peptide has immununosuppressive and insecticidal activities. Suppress cellular immunity which is detectable as a reduction of hemocyte encapsulation in the host. In vivo, ingestion of this peptide (probably at excessive doses) increases larval mortality and reduces leaf consumption in both lepidopteran species D.saccharalis and S.frugiperda, which are permissive and non-permissive hosts for C.flavipes, respectively. In Cotesia flavipes (Parasitic wasp), this protein is Teratocyte protein CftICK-III.